The sequence spans 671 residues: Putative ubiquitin thioesterase 232R (671 aa).

Disordered stretches follow at residues 36–62, 100–123, 171–203, and 250–319; these read EIID…RRIS, SPKI…PVRQ, NQKP…RPVF, and EPIR…SKRS. Low complexity predominate over residues 110 to 123; sequence PSPVHSPVRSPVRQ. Residues 182 to 200 show a composition bias toward pro residues; it reads RRSPSPRRSPSPRRSPSPR. A compositionally biased stretch (low complexity) spans 255-271; the sequence is SSSSRSSRSTRRSSSTK. The segment covering 272–319 has biased composition (basic residues); sequence PSRRSSSRSRRSSSRSRRSSSRSRRSSSRSRRSSRRSTSRSRSLSKRS. One can recognise an OTU domain in the interval 392–521; that stretch reads FRMINVPLDG…NFHYIALEPF (130 aa). Residue Asp400 is part of the active site. Cys403 (nucleophile) is an active-site residue. His514 is a catalytic residue. Positions 589-625 are disordered; sequence KRSLRPSIPPKISTEHRRTPKLRPSVPRPSSIRQSQP.

The catalysed reaction is Thiol-dependent hydrolysis of ester, thioester, amide, peptide and isopeptide bonds formed by the C-terminal Gly of ubiquitin (a 76-residue protein attached to proteins as an intracellular targeting signal).. Functionally, hydrolase that can remove conjugated ubiquitin from proteins and may therefore play an important regulatory role at the level of protein turnover by preventing degradation. The polypeptide is Putative ubiquitin thioesterase 232R (Acheta domesticus (House cricket)).